Consider the following 245-residue polypeptide: 1-(5-phosphoribosyl)-5-[(5-phosphoribosylamino)methylideneamino] imidazole-4-carboxamide isomerase (245 aa).

D8 (proton acceptor) is an active-site residue. Residue D129 is the Proton donor of the active site.

The protein belongs to the HisA/HisF family.

It localises to the cytoplasm. It catalyses the reaction 1-(5-phospho-beta-D-ribosyl)-5-[(5-phospho-beta-D-ribosylamino)methylideneamino]imidazole-4-carboxamide = 5-[(5-phospho-1-deoxy-D-ribulos-1-ylimino)methylamino]-1-(5-phospho-beta-D-ribosyl)imidazole-4-carboxamide. It functions in the pathway amino-acid biosynthesis; L-histidine biosynthesis; L-histidine from 5-phospho-alpha-D-ribose 1-diphosphate: step 4/9. The chain is 1-(5-phosphoribosyl)-5-[(5-phosphoribosylamino)methylideneamino] imidazole-4-carboxamide isomerase from Rhodopseudomonas palustris (strain BisB18).